Here is a 339-residue protein sequence, read N- to C-terminus: Sphingomyelinase D (339 aa).

The first 21 residues, 1-21 (MVSLLRLCSFLLAAGSILVQG), serve as a signal peptide directing secretion. The active site involves His-60. Residues Glu-80, Asp-82, and Asp-128 each coordinate Mg(2+). An SMD-tail motif is present at residues 309 to 316 (ATVDDNPW). The interval 313–339 (DNPWSSMSKKGSSKSSWVKGEVPSIAH) is disordered. Residues 317–328 (SSMSKKGSSKSS) are compositionally biased toward low complexity.

It belongs to the sphingomyelinase D/phospholipase D family. Mg(2+) serves as cofactor.

The protein resides in the secreted. It carries out the reaction a sphingomyelin + H2O = an N-acylsphing-4-enine 1-phosphate + choline + H(+). Functionally, catalyzes the hydrolysis of sphingomyelin. Sphingomyelinases D are produced by some spider in their venoms, but also by arthropods such as ticks, or pathogenic bacteria and fungi. They might play a role in pathogenicity through different mechanisms, such as membrane destabilization and host cell penetration, but also pulmonary inflammation and cutaneous lesions. This chain is Sphingomyelinase D, found in Arthroderma benhamiae (strain ATCC MYA-4681 / CBS 112371) (Trichophyton mentagrophytes).